Here is a 336-residue protein sequence, read N- to C-terminus: MTTLSPENSLSARRSATFILEKRNPPIDKAEWDSFFDENGHLAKSRDFICINILERGLHPFVRTEAWKFLTGYYSWQSSRDERLMVDSNRRRNYNSLCQMYEKIQPLLENLHGNFTETRNNIAYDIQRLYDKDPLGNVLIDKKKLEKTLLLSYVCNTKAEYQRGFHEMVMLFQLMVEHDHETFWLFQFFLQKTEHSCVINIGVGKNLDMLNSLITLLDPEFAEHLKGKGSGAVQSLFPWFCLCFQRAFKTFDDVWRLWEVLLTGKPCRNFQVLVAYSMLQMVREQALLECMSGDAILMACNNLIDLDADELISAACVVYSELMQKEVPQPLKEFLL.

In terms of domain architecture, Rab-GAP TBC spans 57 to 265 (GLHPFVRTEA…RLWEVLLTGK (209 aa)).

In terms of assembly, interacts with ACTB. Interacts with ARMC12. Interacts with TOMM20 and DNAH7. Interacts with RAP1A. Interacts with RAB10. In terms of tissue distribution, expressed in testis, specifically in elongating and elongated spermatids (at protein level). Expressed in the sperm midpiece (at protein level).

It localises to the cytoplasmic vesicle. The protein resides in the secretory vesicle. It is found in the acrosome. The protein localises to the cytoplasm. Its subcellular location is the cytoskeleton. In terms of biological role, acts as a GTPase-activating protein for Rab family protein (s). Essential for the establishment of male fertility, and is required for both the production of normal sperm number and sperm function. Plays an important role in the formation of intact mitochondria, outer dense fibers and axoneme within the sperm tail. Essential for sperm mitochondrial sheath formation and for the interactions of ARMC12 with VDAC2 and VDAC3. May be involved in acrosome formation and cytoskeletal reorganization during spermiogenesis, possibly by regulating RAB3A activity. This chain is TBC1 domain family member 21, found in Mus musculus (Mouse).